A 353-amino-acid polypeptide reads, in one-letter code: Photosystem II protein D1 (353 aa).

An N-acetylthreonine modification is found at threonine 2. Position 2 is a phosphothreonine (threonine 2). A run of 3 helical transmembrane segments spans residues 29–46 (YIGWFGVLMIPTLLTATS), 118–133 (HFLLGVACYMGREWEL), and 142–156 (WIAVAYSAPVAAATA). A chlorophyll a-binding site is contributed by histidine 118. Tyrosine 126 contributes to the pheophytin a binding site. [CaMn4O5] cluster-binding residues include aspartate 170 and glutamate 189. Residues 197 to 218 (FHMLGVAGVFGGSLFSAMHGSL) traverse the membrane as a helical segment. Chlorophyll a is bound at residue histidine 198. Residues histidine 215 and 264–265 (SF) contribute to the a quinone site. Histidine 215 serves as a coordination point for Fe cation. Histidine 272 lines the Fe cation pocket. A helical membrane pass occupies residues 274-288 (FLAAWPVVGIWFTAL). Residues histidine 332, glutamate 333, aspartate 342, and alanine 344 each coordinate [CaMn4O5] cluster. Residues 345-353 (GVEVPSTNG) constitute a propeptide that is removed on maturation.

This sequence belongs to the reaction center PufL/M/PsbA/D family. PSII is composed of 1 copy each of membrane proteins PsbA, PsbB, PsbC, PsbD, PsbE, PsbF, PsbH, PsbI, PsbJ, PsbK, PsbL, PsbM, PsbT, PsbX, PsbY, PsbZ, Psb30/Ycf12, at least 3 peripheral proteins of the oxygen-evolving complex and a large number of cofactors. It forms dimeric complexes. It depends on The D1/D2 heterodimer binds P680, chlorophylls that are the primary electron donor of PSII, and subsequent electron acceptors. It shares a non-heme iron and each subunit binds pheophytin, quinone, additional chlorophylls, carotenoids and lipids. D1 provides most of the ligands for the Mn4-Ca-O5 cluster of the oxygen-evolving complex (OEC). There is also a Cl(-1) ion associated with D1 and D2, which is required for oxygen evolution. The PSII complex binds additional chlorophylls, carotenoids and specific lipids. as a cofactor. In terms of processing, tyr-161 forms a radical intermediate that is referred to as redox-active TyrZ, YZ or Y-Z. C-terminally processed by CTPA; processing is essential to allow assembly of the oxygen-evolving complex and thus photosynthetic growth.

It is found in the plastid. Its subcellular location is the chloroplast thylakoid membrane. It catalyses the reaction 2 a plastoquinone + 4 hnu + 2 H2O = 2 a plastoquinol + O2. Photosystem II (PSII) is a light-driven water:plastoquinone oxidoreductase that uses light energy to abstract electrons from H(2)O, generating O(2) and a proton gradient subsequently used for ATP formation. It consists of a core antenna complex that captures photons, and an electron transfer chain that converts photonic excitation into a charge separation. The D1/D2 (PsbA/PsbD) reaction center heterodimer binds P680, the primary electron donor of PSII as well as several subsequent electron acceptors. This is Photosystem II protein D1 from Morus indica (Mulberry).